The sequence spans 192 residues: Ubiquitin-conjugating enzyme E2 27 (192 aa).

One can recognise a UBC core domain in the interval Ile2–Lys150. The active-site Glycyl thioester intermediate is the Cys88. The region spanning Ser153–Ala192 is the UBA domain.

This sequence belongs to the ubiquitin-conjugating enzyme family. In terms of tissue distribution, expressed in seeds, pistils, siliques, hypocotyls and leaves.

The catalysed reaction is S-ubiquitinyl-[E1 ubiquitin-activating enzyme]-L-cysteine + [E2 ubiquitin-conjugating enzyme]-L-cysteine = [E1 ubiquitin-activating enzyme]-L-cysteine + S-ubiquitinyl-[E2 ubiquitin-conjugating enzyme]-L-cysteine.. The protein operates within protein modification; protein ubiquitination. Functionally, accepts the ubiquitin from the E1 complex and catalyzes its covalent attachment to other proteins. The polypeptide is Ubiquitin-conjugating enzyme E2 27 (UBC27) (Arabidopsis thaliana (Mouse-ear cress)).